The primary structure comprises 374 residues: Queuine tRNA-ribosyltransferase (374 aa).

Residue Asp-91 is the Proton acceptor of the active site. Substrate-binding positions include 91–95 (DSGGY), Asp-145, Gln-189, and Gly-216. The tract at residues 247 to 253 (GVGTVPD) is RNA binding. The active-site Nucleophile is Asp-266. The tract at residues 271–275 (TRNAR) is RNA binding; important for wobble base 34 recognition. Zn(2+) is bound by residues Cys-304, Cys-306, Cys-309, and His-335.

This sequence belongs to the queuine tRNA-ribosyltransferase family. In terms of assembly, homodimer. Within each dimer, one monomer is responsible for RNA recognition and catalysis, while the other monomer binds to the replacement base PreQ1. Zn(2+) is required as a cofactor.

It carries out the reaction 7-aminomethyl-7-carbaguanine + guanosine(34) in tRNA = 7-aminomethyl-7-carbaguanosine(34) in tRNA + guanine. The protein operates within tRNA modification; tRNA-queuosine biosynthesis. In terms of biological role, catalyzes the base-exchange of a guanine (G) residue with the queuine precursor 7-aminomethyl-7-deazaguanine (PreQ1) at position 34 (anticodon wobble position) in tRNAs with GU(N) anticodons (tRNA-Asp, -Asn, -His and -Tyr). Catalysis occurs through a double-displacement mechanism. The nucleophile active site attacks the C1' of nucleotide 34 to detach the guanine base from the RNA, forming a covalent enzyme-RNA intermediate. The proton acceptor active site deprotonates the incoming PreQ1, allowing a nucleophilic attack on the C1' of the ribose to form the product. After dissociation, two additional enzymatic reactions on the tRNA convert PreQ1 to queuine (Q), resulting in the hypermodified nucleoside queuosine (7-(((4,5-cis-dihydroxy-2-cyclopenten-1-yl)amino)methyl)-7-deazaguanosine). This chain is Queuine tRNA-ribosyltransferase, found in Leptospira interrogans serogroup Icterohaemorrhagiae serovar Lai (strain 56601).